A 90-amino-acid chain; its full sequence is Movement protein (90 aa).

Residues 32 to 52 form a helical membrane-spanning segment; that stretch reads FVFVTFGLLIAVGVAWLAYTL.

Belongs to the mastrevirus movement protein family. Interacts with the capsid protein (CP). Part of a MP-CP-viral DNA complex.

The protein localises to the host membrane. Involved in the viral transport within, and between cells. In Wheat dwarf virus (isolate Sweden) (WDV), this protein is Movement protein.